Consider the following 328-residue polypeptide: MSAFDRIGVVGAGAWGTALANVAARAGRAVKLWSRDPAQVAEMAARRENARGLPGIALEAGVTPTADLREAAACEAVLLVVPAQVCRAVSGELAPLLAAGTPLVSCAKGIERGTAAFMTDVIRAAAPAARPMVLSGPSFADDVARGLPTAVTLAGEDGALAETLAAALGSSTFRLYHSSDVRGVEIGGAAKNVLAIAAGIVAGRRLGASAGAALTARGFAELQRFGRAFGAQPDTLTGLSGLGDLILTAGGPQSRNFAFGLALGQTGEVPQGGKLAEGAFTASALVAMAAGRGVEMPICAAVDAVLSGRLSVDGAIEALMARPQRAEA.

NADPH contacts are provided by tryptophan 15, arginine 35, and lysine 108. The sn-glycerol 3-phosphate site is built by lysine 108, glycine 136, and serine 138. Alanine 140 provides a ligand contact to NADPH. Positions 191, 244, 254, 255, and 256 each coordinate sn-glycerol 3-phosphate. Catalysis depends on lysine 191, which acts as the Proton acceptor. Arginine 255 is a binding site for NADPH. Residues leucine 275 and glutamate 277 each contribute to the NADPH site.

It belongs to the NAD-dependent glycerol-3-phosphate dehydrogenase family.

Its subcellular location is the cytoplasm. It carries out the reaction sn-glycerol 3-phosphate + NAD(+) = dihydroxyacetone phosphate + NADH + H(+). The catalysed reaction is sn-glycerol 3-phosphate + NADP(+) = dihydroxyacetone phosphate + NADPH + H(+). It functions in the pathway membrane lipid metabolism; glycerophospholipid metabolism. Its function is as follows. Catalyzes the reduction of the glycolytic intermediate dihydroxyacetone phosphate (DHAP) to sn-glycerol 3-phosphate (G3P), the key precursor for phospholipid synthesis. The protein is Glycerol-3-phosphate dehydrogenase [NAD(P)+] of Azorhizobium caulinodans (strain ATCC 43989 / DSM 5975 / JCM 20966 / LMG 6465 / NBRC 14845 / NCIMB 13405 / ORS 571).